The following is an 82-amino-acid chain: uncharacterized protein (82 aa).

Transmembrane regions (helical) follow at residues tryptophan 22–alanine 39 and leucine 46–isoleucine 65.

The protein localises to the cell membrane. This is an uncharacterized protein from Bacillus subtilis (strain 168).